The sequence spans 509 residues: Poly(A) RNA polymerase GLD2-A (509 aa).

Residues 88–107 (PGSPSSSFQNRKRRSDEGNV) form a disordered region. Positions 240 and 242 each coordinate Mg(2+). Positions 409–462 (LGDLLLGFLKYFAVEFDWSKDIISVREGKALPRSDDYLWRNKYICVEEPFDGTN) constitute a PAP-associated domain.

This sequence belongs to the DNA polymerase type-B-like family. GLD2 subfamily. In terms of assembly, component of a complex at least composed of cpeb1, cpsf1, tent2/gld2, pabpc1/ePAB, parn and sympk. Following oocyte maturation, parn is expelled from the complex. Interacts with rbfox2 and sympk. Mg(2+) serves as cofactor. Mn(2+) is required as a cofactor.

The protein localises to the cytoplasm. The catalysed reaction is RNA(n) + ATP = RNA(n)-3'-adenine ribonucleotide + diphosphate. Its function is as follows. Cytoplasmic poly(A) RNA polymerase that adds successive AMP monomers to the 3'-end of specific RNAs, forming a poly(A) tail. In contrast to the canonical nuclear poly(A) RNA polymerase, it only adds poly(A) to selected cytoplasmic mRNAs during oocyte maturation. Plays a central role during oocyte maturation by mediating polyadenylation of dormant mRNAs, which contain 5'AAUAAA-3' sequence in their 3'UTR. In immature oocytes, polyadenylation of poly(A) tails is counteracted by the ribonuclease parn. During maturation parn is excluded from the ribonucleoprotein complex, allowing poly(A) elongation and activation of mRNAs. May not play a role in replication-dependent histone mRNA degradation. This chain is Poly(A) RNA polymerase GLD2-A (tent2-a), found in Xenopus laevis (African clawed frog).